The primary structure comprises 123 residues: uncharacterized protein (123 aa).

This sequence to insertion element IS1016 transposase.

This is an uncharacterized protein from Haemophilus influenzae (strain ATCC 51907 / DSM 11121 / KW20 / Rd).